A 628-amino-acid chain; its full sequence is Propionate--CoA ligase (628 aa).

Belongs to the ATP-dependent AMP-binding enzyme family.

The enzyme catalyses propanoate + ATP + CoA = propanoyl-CoA + AMP + diphosphate. It participates in organic acid metabolism; propanoate degradation. In terms of biological role, catalyzes the synthesis of propionyl-CoA from propionate and CoA. Also converts acetate to acetyl-CoA but with a lower specific activity. The sequence is that of Propionate--CoA ligase (prpE) from Escherichia coli (strain K12).